The sequence spans 356 residues: Nicotinate-nucleotide--dimethylbenzimidazole phosphoribosyltransferase (356 aa).

Catalysis depends on Glu317, which acts as the Proton acceptor.

Belongs to the CobT family. As to quaternary structure, homodimer.

The catalysed reaction is 5,6-dimethylbenzimidazole + nicotinate beta-D-ribonucleotide = alpha-ribazole 5'-phosphate + nicotinate + H(+). It functions in the pathway nucleoside biosynthesis; alpha-ribazole biosynthesis; alpha-ribazole from 5,6-dimethylbenzimidazole: step 1/2. Catalyzes the synthesis of alpha-ribazole-5'-phosphate from nicotinate mononucleotide (NAMN) and 5,6-dimethylbenzimidazole (DMB). The chain is Nicotinate-nucleotide--dimethylbenzimidazole phosphoribosyltransferase from Salmonella dublin (strain CT_02021853).